A 445-amino-acid chain; its full sequence is Phosphoglucosamine mutase (445 aa).

Serine 102 functions as the Phosphoserine intermediate in the catalytic mechanism. The Mg(2+) site is built by serine 102, aspartate 241, aspartate 243, and aspartate 245. Position 102 is a phosphoserine (serine 102).

It belongs to the phosphohexose mutase family. Mg(2+) is required as a cofactor. Post-translationally, activated by phosphorylation.

The enzyme catalyses alpha-D-glucosamine 1-phosphate = D-glucosamine 6-phosphate. Its function is as follows. Catalyzes the conversion of glucosamine-6-phosphate to glucosamine-1-phosphate. In Salmonella paratyphi A (strain ATCC 9150 / SARB42), this protein is Phosphoglucosamine mutase.